A 305-amino-acid chain; its full sequence is Phosphoribosylaminoimidazole-succinocarboxamide synthase (305 aa).

It belongs to the SAICAR synthetase family.

It carries out the reaction 5-amino-1-(5-phospho-D-ribosyl)imidazole-4-carboxylate + L-aspartate + ATP = (2S)-2-[5-amino-1-(5-phospho-beta-D-ribosyl)imidazole-4-carboxamido]succinate + ADP + phosphate + 2 H(+). The protein operates within purine metabolism; IMP biosynthesis via de novo pathway; 5-amino-1-(5-phospho-D-ribosyl)imidazole-4-carboxamide from 5-amino-1-(5-phospho-D-ribosyl)imidazole-4-carboxylate: step 1/2. The sequence is that of Phosphoribosylaminoimidazole-succinocarboxamide synthase from Tropheryma whipplei (strain Twist) (Whipple's bacillus).